The following is a 469-amino-acid chain: tRNA(Ile)-lysidine synthase (469 aa).

Residue 26–31 (SGGPDS) coordinates ATP.

Belongs to the tRNA(Ile)-lysidine synthase family.

The protein resides in the cytoplasm. It catalyses the reaction cytidine(34) in tRNA(Ile2) + L-lysine + ATP = lysidine(34) in tRNA(Ile2) + AMP + diphosphate + H(+). Ligates lysine onto the cytidine present at position 34 of the AUA codon-specific tRNA(Ile) that contains the anticodon CAU, in an ATP-dependent manner. Cytidine is converted to lysidine, thus changing the amino acid specificity of the tRNA from methionine to isoleucine. The chain is tRNA(Ile)-lysidine synthase from Clostridium perfringens (strain ATCC 13124 / DSM 756 / JCM 1290 / NCIMB 6125 / NCTC 8237 / Type A).